The chain runs to 113 residues: UPF0482 protein KPN78578_15540 (113 aa).

The first 28 residues, 1-28 (MNMTLNKRWCLTAILALSAVVYTSSSYA), serve as a signal peptide directing secretion. Residues 38–60 (GDSAQSRQQASMEKEQWNDTRSL) are disordered. The segment covering 39–48 (DSAQSRQQAS) has biased composition (polar residues). The span at 49-59 (MEKEQWNDTRS) shows a compositional bias: basic and acidic residues.

It belongs to the UPF0482 family.

This chain is UPF0482 protein KPN78578_15540, found in Klebsiella pneumoniae subsp. pneumoniae (strain ATCC 700721 / MGH 78578).